The primary structure comprises 526 residues: Probable feruloyl esterase B-2 (526 aa).

An N-terminal signal peptide occupies residues 1–18 (MTKLSLLPLLTLASAVLA). 2 disulfides stabilise this stretch: Cys27–Cys74 and Cys62–Cys113. Residue Asn52 is glycosylated (N-linked (GlcNAc...) asparagine). Asn137 carries N-linked (GlcNAc...) asparagine glycosylation. 4 cysteine pairs are disulfide-bonded: Cys186–Cys441, Cys255–Cys272, Cys281–Cys291, and Cys503–Cys525. The active-site Acyl-ester intermediate is Ser187. Residue Asn233 is glycosylated (N-linked (GlcNAc...) asparagine). Ca(2+) is bound by residues Asp256, Asp259, Ala261, Asp263, and Ile265. Residues Asp400 and His440 each act as charge relay system in the active site. N-linked (GlcNAc...) asparagine glycosylation is present at Asn516.

It belongs to the tannase family.

It is found in the secreted. It carries out the reaction feruloyl-polysaccharide + H2O = ferulate + polysaccharide.. Its function is as follows. Involved in degradation of plant cell walls. Hydrolyzes the feruloyl-arabinose ester bond in arabinoxylans as well as the feruloyl-galactose and feruloyl-arabinose ester bonds in pectin. This chain is Probable feruloyl esterase B-2 (faeB-2), found in Aspergillus fumigatus (strain ATCC MYA-4609 / CBS 101355 / FGSC A1100 / Af293) (Neosartorya fumigata).